Here is a 351-residue protein sequence, read N- to C-terminus: Fruit bromelain (351 aa).

The signal sequence occupies residues 1–24 (MASKVQLVFLFLFLCAMWASPSAA). Residues 25–121 (SRDEPNDPMM…VVSFDDVNIS (97 aa)) constitute a propeptide, activation peptide. N-linked (GlcNAc...) asparagine glycosylation occurs at N119. 3 disulfides stabilise this stretch: C144–C184, C178–C217, and C273–C325. C147 is an active-site residue. Catalysis depends on residues H279 and N300.

It belongs to the peptidase C1 family.

It catalyses the reaction Hydrolysis of proteins with broad specificity for peptide bonds. Bz-Phe-Val-Arg-|-NHMec is a good synthetic substrate, but there is no action on Z-Arg-Arg-|-NHMec (cf. stem bromelain).. Its function is as follows. Cysteine proteinase with a high level of diversity in substrate specificity. This Ananas comosus (Pineapple) protein is Fruit bromelain.